Reading from the N-terminus, the 487-residue chain is Multiple inositol polyphosphate phosphatase 1 (487 aa).

The first 30 residues, 1–30, serve as a signal peptide directing secretion; the sequence is MLRAPGCLLRTSVAPAAALAAALLSSLARC. His-89 is an active-site residue. 2 N-linked (GlcNAc...) asparagine glycosylation sites follow: Asn-242 and Asn-481. The Prevents secretion from ER signature appears at 484–487; it reads SDEL.

The protein belongs to the histidine acid phosphatase family. MINPP1 subfamily. In terms of processing, N-glycosylated. Widely expressed with highest levels in kidney, liver, cerebellum and placenta.

It localises to the endoplasmic reticulum lumen. Its subcellular location is the secreted. It is found in the cell membrane. It carries out the reaction 1D-myo-inositol hexakisphosphate + H2O = 1D-myo-inositol 1,2,4,5,6-pentakisphosphate + phosphate. The catalysed reaction is 1D-myo-inositol 1,2,4,5,6-pentakisphosphate + H2O = 1D-myo-inositol 1,2,5,6-tetrakisphosphate + phosphate. The enzyme catalyses 1D-myo-inositol 1,2,5,6-tetrakisphosphate + H2O = 1D-myo-inositol 1,2,6-trisphosphate + phosphate. It catalyses the reaction 1D-myo-inositol 1,2,6-trisphosphate + H2O = 1D-myo-inositol 1,2-bisphosphate + phosphate. It carries out the reaction 1D-myo-inositol 1,2-bisphosphate + H2O = 1D-myo-inositol 2-phosphate + phosphate. The catalysed reaction is 1D-myo-inositol hexakisphosphate + H2O = 1D-myo-inositol 1,2,3,5,6-pentakisphosphate + phosphate. The enzyme catalyses 1D-myo-inositol 1,2,3,5,6-pentakisphosphate + H2O = 1D-myo-inositol 1,2,3,6-tetrakisphosphate + phosphate. It catalyses the reaction 1D-myo-inositol 1,2,3,6-tetrakisphosphate + H2O = 1D-myo-inositol 1,2,3-trisphosphate + phosphate. It carries out the reaction 1D-myo-inositol 1,2,3-trisphosphate + H2O = 1D-myo-inositol 2,3-bisphosphate + phosphate. The catalysed reaction is 1D-myo-inositol 2,3-bisphosphate + H2O = 1D-myo-inositol 2-phosphate + phosphate. The enzyme catalyses 1D-myo-inositol 1,3,4,5,6-pentakisphosphate + H2O = 1D-myo-inositol 1,4,5,6-tetrakisphosphate + phosphate. It catalyses the reaction 1D-myo-inositol 1,4,5,6-tetrakisphosphate + H2O = 1D-myo-inositol 1,4,5-trisphosphate + phosphate. It carries out the reaction (2R)-2,3-bisphosphoglycerate + H2O = (2R)-2-phosphoglycerate + phosphate. Multiple inositol polyphosphate phosphatase that hydrolyzes 1D-myo-inositol 1,3,4,5,6-pentakisphosphate (InsP5[2OH]) and 1D-myo-inositol hexakisphosphate (InsP6) to a range of less phosphorylated inositol phosphates. This regulates the availability of these various small molecule second messengers and metal chelators which control many aspects of cell physiology. Has a weak in vitro activity towards 1D-myo-inositol 1,4,5-trisphosphate which is unlikely to be physiologically relevant. By regulating intracellular inositol polyphosphates pools, which act as metal chelators, it may control the availability of intracellular calcium and iron, which are important for proper neuronal development and homeostasis. May have a dual substrate specificity, and function as a 2,3-bisphosphoglycerate 3-phosphatase hydrolyzing 2,3-bisphosphoglycerate to 2-phosphoglycerate. 2,3-bisphosphoglycerate (BPG) is formed as part of the Rapoport-Luebering glycolytic bypass and is a regulator of systemic oxygen homeostasis as the major allosteric effector of hemoglobin. The protein is Multiple inositol polyphosphate phosphatase 1 of Homo sapiens (Human).